Here is a 152-residue protein sequence, read N- to C-terminus: VQ motif-containing protein 8, chloroplastic (152 aa).

The disordered stretch occupies residues 1 to 42; the sequence is MIPTRCNEINGSRPSSLKLAGESHTIKKTSSCKSKPRPHGRA. The N-terminal 58 residues, 1–58, are a transit peptide targeting the chloroplast; sequence MIPTRCNEINGSRPSSLKLAGESHTIKKTSSCKSKPRPHGRASPVIIYAHSPKVIHTR. A VQ motif is present at residues 62–71; it reads FMALVQRLTG. The disordered stretch occupies residues 80 to 108; the sequence is TSESSSSVVTEEVNVGDDNTAAPFSQDRT. Residues 81 to 92 show a composition bias toward low complexity; that stretch reads SESSSSVVTEEV.

It localises to the plastid. Its subcellular location is the chloroplast. Functionally, may be involved in chloroplast development. The polypeptide is VQ motif-containing protein 8, chloroplastic (Arabidopsis thaliana (Mouse-ear cress)).